The following is a 134-amino-acid chain: Small ribosomal subunit protein uS8 (134 aa).

This sequence belongs to the universal ribosomal protein uS8 family. Part of the 30S ribosomal subunit. Contacts proteins S5 and S12.

Functionally, one of the primary rRNA binding proteins, it binds directly to 16S rRNA central domain where it helps coordinate assembly of the platform of the 30S subunit. The chain is Small ribosomal subunit protein uS8 from Thermotoga maritima (strain ATCC 43589 / DSM 3109 / JCM 10099 / NBRC 100826 / MSB8).